A 109-amino-acid polypeptide reads, in one-letter code: Oncomodulin (109 aa).

An N-acetylserine modification is found at Ser-2. EF-hand domains follow at residues 39–74 and 78–109; these read MSAS…FESG and LTES…MVHS. The Ca(2+) site is built by Asp-52, Asp-54, Ser-56, Tyr-58, Glu-63, Asp-91, Asp-93, Asp-95, Lys-97, and Glu-102.

It belongs to the parvalbumin family. As to expression, abundant in the organ of Corti.

Its function is as follows. Has some calmodulin-like activity with respect to enzyme activation and growth regulation. Binds two calcium ions. The sequence is that of Oncomodulin (OCM) from Cavia porcellus (Guinea pig).